The primary structure comprises 498 residues: WD repeat-containing protein 55 homolog (498 aa).

Residues 1 to 131 (MHTHNNFKTP…ATFDLDEDDE (131 aa)) are disordered. Composition is skewed to acidic residues over residues 12–23 (DEDELDDLDEDM) and 31–48 (IEQE…EYDL). WD repeat units lie at residues 154–193 (KLED…NKLL), 198–237 (VHSK…LKKL), 241–279 (AHDD…AIFE), 282–321 (ELED…MYVQ), 324–363 (PYEE…YHCD), and 408–447 (QHNM…DFGE).

Belongs to the WD repeat WDR55 family.

The sequence is that of WD repeat-containing protein 55 homolog from Drosophila simulans (Fruit fly).